Here is a 124-residue protein sequence, read N- to C-terminus: Fluoride-specific ion channel FluC (124 aa).

Helical transmembrane passes span 5–25, 37–57, 69–89, and 99–119; these read ILAV…AGTW, ATLA…GLFL, GLIV…LDTL, and LALG…WAGL. Residues G76 and T79 each coordinate Na(+).

This sequence belongs to the fluoride channel Fluc/FEX (TC 1.A.43) family.

Its subcellular location is the cell inner membrane. The enzyme catalyses fluoride(in) = fluoride(out). With respect to regulation, na(+) is not transported, but it plays an essential structural role and its presence is essential for fluoride channel function. In terms of biological role, fluoride-specific ion channel. Important for reducing fluoride concentration in the cell, thus reducing its toxicity. In Pseudomonas syringae pv. tomato (strain ATCC BAA-871 / DC3000), this protein is Fluoride-specific ion channel FluC.